A 1319-amino-acid polypeptide reads, in one-letter code: Protein Jumonji (1319 aa).

A compositionally biased stretch (basic residues) spans Met1–Ile11. 7 disordered regions span residues Met1 to Trp23, Asp50 to Pro130, Asp173 to Gly265, Tyr351 to Asn382, His396 to Asn478, Pro499 to Ala537, and Gln549 to Ala599. Residues Ala61–Gly70 are compositionally biased toward polar residues. Residues Gly74–Gly88 show a composition bias toward basic and acidic residues. A Nuclear localization signal motif is present at residues Pro96 to Arg102. Positions Lys98–Arg107 are enriched in basic residues. A compositionally biased stretch (polar residues) spans Phe109 to Pro121. Over residues Asp173–Glu185 the composition is skewed to acidic residues. The segment covering Val191–Pro200 has biased composition (polar residues). Basic and acidic residues predominate over residues Lys221 to His251. Residues Leu372 to Asn382 are compositionally biased toward polar residues. Residues Ser413 to Val424 are compositionally biased toward basic and acidic residues. Residues Pro505–Pro515 are compositionally biased toward pro residues. Low complexity-rich tracts occupy residues Ala516–Ala525 and Thr554–Ser570. The span at Arg583–Arg598 shows a compositional bias: basic and acidic residues. The JmjN domain occupies Val607–Glu648. One can recognise an ARID domain in the interval Trp671–Pro779. Basic and acidic residues predominate over residues Arg798–His811. Positions Arg798–Arg818 are disordered. Positions Gly944–Pro948 match the GSGFP motif motif. The 165-residue stretch at Pro954–Lys1118 folds into the JmjC domain.

It belongs to the JARID2 family. As to quaternary structure, associates with the PRC2 complex.

It is found in the nucleus. Regulator of histone methyltransferase complexes that plays an essential role in embryonic development. Acts by modulating histone methyltransferase activity and promoting the recruitment of histone methyltransferase complexes to their target genes. Binds DNA and mediates the recruitment of the PRC2 complex to target genes in embryonic stem cells. Does not have histone demethylase activity but regulates activity of various histone methyltransferase complexes. In embryonic stem cells, it associates with the PRC2 complex and inhibits trimethylation of 'Lys-27' of histone H3 (H3K27me3) by the PRC2 complex, thereby playing a key role in differentiation of embryonic stem cells and normal development. This chain is Protein Jumonji (jarid2b), found in Danio rerio (Zebrafish).